Here is a 312-residue protein sequence, read N- to C-terminus: DnaJ homolog subfamily B member 7 (312 aa).

One can recognise a J domain in the interval 3–69 (DYYEVLGVQR…EKRDIYDKYG (67 aa)). A disordered region spans residues 272–312 (SWVTNKKEPSIFSAGFKEGGRRKKKKHKEGQKKKKSNKRNH). Positions 291 to 312 (GRRKKKKHKEGQKKKKSNKRNH) are enriched in basic residues.

Probably acts as a co-chaperone. This is DnaJ homolog subfamily B member 7 (Dnajb7) from Mus musculus (Mouse).